Consider the following 92-residue polypeptide: Em-like protein GEA6 (92 aa).

Basic and acidic residues-rich tracts occupy residues 1–18 (MASQ…KKGE) and 37–51 (AEGR…KEQL). Residues 1–92 (MASQQEKKQL…IDESKFRTKT (92 aa)) form a disordered region.

The protein belongs to the small hydrophilic plant seed protein family. As to expression, present only in nearly dry and dry seeds.

Functionally, it is thought to provide protection for the cytoplasm during the desiccation stage of embryo development. In Arabidopsis thaliana (Mouse-ear cress), this protein is Em-like protein GEA6 (EM6).